A 148-amino-acid polypeptide reads, in one-letter code: MHRVTITLDDDLMEKLDAIIAARGYQNRSEAIRDLARIGIQQTAAETTSGHCVGAMVYTYDHSKRDLPRKLTQSFHHHHDLSRATMHVHLDHDQCLEVTILDGNATELQHFADHIFAERGVRYGRLVTIPAEPPAEGHEHHHEHDASS.

Residues His-76, His-87, His-89, and Cys-95 each coordinate Ni(2+).

Belongs to the transcriptional regulatory CopG/NikR family. It depends on Ni(2+) as a cofactor.

Its function is as follows. Transcriptional regulator. The protein is Putative nickel-responsive regulator of Rhodopseudomonas palustris (strain ATCC BAA-98 / CGA009).